Consider the following 227-residue polypeptide: Phosphatidylserine decarboxylase proenzyme (227 aa).

Serine 181 (schiff-base intermediate with substrate; via pyruvic acid) is an active-site residue. Serine 181 bears the Pyruvic acid (Ser); by autocatalysis mark.

Belongs to the phosphatidylserine decarboxylase family. PSD-A subfamily. In terms of assembly, heterodimer of a large membrane-associated beta subunit and a small pyruvoyl-containing alpha subunit. Pyruvate is required as a cofactor. In terms of processing, is synthesized initially as an inactive proenzyme. Formation of the active enzyme involves a self-maturation process in which the active site pyruvoyl group is generated from an internal serine residue via an autocatalytic post-translational modification. Two non-identical subunits are generated from the proenzyme in this reaction, and the pyruvate is formed at the N-terminus of the alpha chain, which is derived from the carboxyl end of the proenzyme. The post-translation cleavage follows an unusual pathway, termed non-hydrolytic serinolysis, in which the side chain hydroxyl group of the serine supplies its oxygen atom to form the C-terminus of the beta chain, while the remainder of the serine residue undergoes an oxidative deamination to produce ammonia and the pyruvoyl prosthetic group on the alpha chain.

It localises to the cell membrane. The catalysed reaction is a 1,2-diacyl-sn-glycero-3-phospho-L-serine + H(+) = a 1,2-diacyl-sn-glycero-3-phosphoethanolamine + CO2. It participates in phospholipid metabolism; phosphatidylethanolamine biosynthesis; phosphatidylethanolamine from CDP-diacylglycerol: step 2/2. Catalyzes the formation of phosphatidylethanolamine (PtdEtn) from phosphatidylserine (PtdSer). This is Phosphatidylserine decarboxylase proenzyme from Anaplasma phagocytophilum (strain HZ).